We begin with the raw amino-acid sequence, 233 residues long: DFVYQFKGLCYYTNGTQRIRSVDRRFYNQEEFLRYDSDVGEFRALTELGRSWADDWNSQKEILEQKRAEMDTVCRYNYEETEVPTSLRRLERPNVAISLSRTEALNHHNLLVCSVTDFYPAQIKVRWFRNGQEETTGVVSTQLIKNGDWTFQILVMLEMTPQRGDVYTCHVDHASLESPVTVEWRAQSESAQSKMLSGIGGLVLGVIFLGLGLFIRHKRQKGPQGPPPAGLLQ.

Residues 1 to 80 are beta-1; sequence DFVYQFKGLC…DTVCRYNYEE (80 aa). At 1 to 194 the chain is on the extracellular side; the sequence is DFVYQFKGLC…RAQSESAQSK (194 aa). N-linked (GlcNAc...) asparagine glycosylation occurs at asparagine 14. Positions 81–184 are beta-2; it reads TEVPTSLRRL…SLESPVTVEW (104 aa). The Ig-like C1-type domain maps to 93–181; that stretch reads PNVAISLSRT…DHASLESPVT (89 aa). The interval 185-194 is connecting peptide; it reads RAQSESAQSK. A helical membrane pass occupies residues 195–215; that stretch reads MLSGIGGLVLGVIFLGLGLFI. The Cytoplasmic portion of the chain corresponds to 216–233; that stretch reads RHKRQKGPQGPPPAGLLQ.

This sequence belongs to the MHC class II family.

The protein localises to the membrane. Its function is as follows. Involved in the presentation of foreign antigens to the immune system. The polypeptide is Rano class II histocompatibility antigen, A beta chain (RT1-B) (Rattus norvegicus (Rat)).